The following is a 641-amino-acid chain: MTVTKTPLLDTVRDASDVRRLPEEKLSQLADELRAETISAVSVTGGHLGAGLGVVELTVALHHVFNTPHDRLIWDVGHQCYPHKILTGRRDRIRTLRQGGGLSGFTRRSESEYDPFGAAHSSTSISAGLGMAVARDLSGGDRNVIAVIGDGAMSAGMAYEAMNNAGAMDSRLIVILNDNDMSIAPPTGAMSAYLARLISGRTYLSLREIGKQLAGHLPKFVKDGAAKAEEFARGFWTGGTLFEEMGFYYVGPIDGHNLEHLLPVLKNVRDAKTGPILVHVVTQKGKGYPPAEASADKYHGVVKFDVVTGAQVKAKSNAPSYTRVFAETLIDEARRDDKVVAITAAMPSGTGLDLFGQAFPQRTFDVGIAEQHAVTFAAGLAAEGYRPFCALYSTFLQRGYDQVVHDVALQGLPVRFAIDRAGLVGADGATHAGAFDLAMLTCLPGFTVMAPADEAELTHMIATAVGHDAGPIAFRFPRGEGVGVERPEKGERLPIGKGRVVREGQDIAFLSLGTRLAACLDVAERLSSLGISATVADARFAKPIDRELIAHLARTHAALVVVEEGSVGGFGSQVLQFLSDEGLMDGGLKVRALTLPDTYIDHDTPAAQLAEAGLDADGIYKRALALVQPAERRGAVATKRA.

Thiamine diphosphate contacts are provided by residues His-78 and Ala-119–Ser-121. Asp-150 contacts Mg(2+). Thiamine diphosphate contacts are provided by residues Gly-151–Ala-152, Asn-179, Tyr-288, and Glu-370. A Mg(2+)-binding site is contributed by Asn-179.

The protein belongs to the transketolase family. DXPS subfamily. Homodimer. Mg(2+) serves as cofactor. It depends on thiamine diphosphate as a cofactor.

It carries out the reaction D-glyceraldehyde 3-phosphate + pyruvate + H(+) = 1-deoxy-D-xylulose 5-phosphate + CO2. It functions in the pathway metabolic intermediate biosynthesis; 1-deoxy-D-xylulose 5-phosphate biosynthesis; 1-deoxy-D-xylulose 5-phosphate from D-glyceraldehyde 3-phosphate and pyruvate: step 1/1. Functionally, catalyzes the acyloin condensation reaction between C atoms 2 and 3 of pyruvate and glyceraldehyde 3-phosphate to yield 1-deoxy-D-xylulose-5-phosphate (DXP). This is 1-deoxy-D-xylulose-5-phosphate synthase from Azorhizobium caulinodans (strain ATCC 43989 / DSM 5975 / JCM 20966 / LMG 6465 / NBRC 14845 / NCIMB 13405 / ORS 571).